We begin with the raw amino-acid sequence, 712 residues long: Anaerobic ribonucleoside-triphosphate reductase (712 aa).

One can recognise an ATP-cone domain in the interval 3–92; sequence PHVMKRDGCK…EYRHDRDIER (90 aa). In terms of domain architecture, Glycine radical spans 583-708; it reads KKVNPYDKID…VKRRVKHLGN (126 aa). Residues cysteine 644, cysteine 647, cysteine 662, and cysteine 665 each coordinate Zn(2+). Glycine 681 bears the Glycine radical mark.

This sequence belongs to the anaerobic ribonucleoside-triphosphate reductase family. In terms of assembly, homodimer. Forms a tetramer composed of two NrdD and two NrdG subunits.

The catalysed reaction is a ribonucleoside 5'-triphosphate + formate + H(+) = a 2'-deoxyribonucleoside 5'-triphosphate + CO2 + H2O. It catalyses the reaction formate + ATP + H(+) = dATP + CO2 + H2O. The enzyme catalyses CTP + formate + H(+) = dCTP + CO2 + H2O. It carries out the reaction GTP + formate + H(+) = dGTP + CO2 + H2O. The catalysed reaction is UTP + formate + H(+) = dUTP + CO2 + H2O. Its activity is regulated as follows. Activated under anaerobic conditions by NrdG, a tightly associated activase. Activation involves the formation of a glycyl radical at Gly-681. Exposure of the activated reductase to oxygen leads to C-terminal truncation and inactivation of the protein, by cleavage at the N-terminal side of Gly-681. The presence of zinc protects the protein from proteolysis and prevents the formation of disulfide bridges within it. The enzyme shows a basal activity in the absence of any effector, but reduction is stimulated up to 10-fold by an appropriate modulator (dGTP for ATP reduction, ATP for CTP and UTP reduction, and dTTP for GTP reduction). dGTP and dTTP inhibit the reduction of the incorrect substrate, and dATP inhibits reduction of all four. These modulators act as allosteric effectors. Its function is as follows. Catalyzes the conversion of ribonucleotides into deoxyribonucleotides, which are required for DNA synthesis and repair. Can reduce each of the four common ribonucleoside triphosphates. In Escherichia coli (strain K12), this protein is Anaerobic ribonucleoside-triphosphate reductase.